Reading from the N-terminus, the 372-residue chain is Cytochrome b (372 aa).

4 helical membrane-spanning segments follow: residues 25 to 45 (FGSM…FLAI), 69 to 90 (WIMQ…YIHI), 105 to 125 (WLSG…GYVL), and 170 to 190 (FFAL…IHIM). Heme b is bound by residues H75 and H89. The heme b site is built by H174 and H188. H193 contacts a ubiquinone. 4 helical membrane passes run 218 to 238 (HKDI…MTLT), 280 to 300 (LGGT…PFTH), 312 to 332 (LTQL…WAAT), and 339 to 358 (FTMI…IMNP).

This sequence belongs to the cytochrome b family. In terms of assembly, the cytochrome bc1 complex contains 3 respiratory subunits (MT-CYB, CYC1 and UQCRFS1), 2 core proteins (UQCRC1 and UQCRC2) and probably 6 low-molecular weight proteins. Requires heme b as cofactor.

The protein resides in the mitochondrion inner membrane. Component of the ubiquinol-cytochrome c reductase complex (complex III or cytochrome b-c1 complex) that is part of the mitochondrial respiratory chain. The b-c1 complex mediates electron transfer from ubiquinol to cytochrome c. Contributes to the generation of a proton gradient across the mitochondrial membrane that is then used for ATP synthesis. This is Cytochrome b (MT-CYB) from Lycodon semicarinatus (Ryukyu odd-tooth snake).